We begin with the raw amino-acid sequence, 776 residues long: MSSSLLSVLKEKSRSLKIRNKPVKMTSQERMIVHRCRFVDFTPATITSLAFSHKSNINKLTPSDLRLAIGRSNGNIEIWNPRNNWFQEMVIEGGKDRSIEGLCWSNVNGESLRLFSIGGSTVVTEWDLATGLPLRNYDCNSGVIWSISINDSQDKLSVGCDNGTVVLIDISGGPGVLEHDTILMRQEARVLTLAWKKDDFVIGGCSDGRIRIWSAQKNDENMGRLLHTMKVDKAKKESTLVWSVIYLPRTDQIASGDSTGSIKFWDFQFATLNQSFKAHDADVLCLTTDTDNNYVFSAGVDRKIFQFSQNTNKSQKNNRWVNSSNRLLHGNDIRAICAYQSKGADFLVSGGVEKTLVINSLTSFSNGNYRKMPTVEPYSKNVLVNKEQRLVVSWSESTVKIWTMGTDSSTEQNYKLVCKLTLKDDQNISTCSLSPDGQVLVVGRPSTTKVFHLQPVGNKLKVTKLDNDLLLRTSTKLVKFIDNSKIVICSCEDDVFIVDLESEEDEKPQEVELLEVTSTKSSIKVPYINRINHLEVDQNIAVISRGCGVVDILDLKARISKPLARLNNFITAVHINTSRKSVVVITADNKIYEFNMNLNSEAENEDSESVLTQWSKNNTDNLPKEWKTLKENCVGIFSDIENSSRLWFWGATWISRIDFDVDFPINKRRKQKKRTHEGLTITDESNFMNDEEDDEDDDIDMEISENLNVLLNQGNKIKSTDVQRNEESSGHFFFTDKYKPLLFVDLISSNELAIIERNPLTFHSKQKAFIQPKLVF.

WD repeat units lie at residues 35-40, 132-169, 178-214, 230-266, 271-308, and 417-452; these read RCRFVD, LPLR…VLID, EHDT…RIWS, KVDK…KFWD, TLNQ…FQFS, and VCKL…KVFH.

In terms of assembly, interacts with snoRNA U3. Interacts with MPP10. Component of the ribosomal small subunit (SSU) processome composed of at least 40 protein subunits and snoRNA U3. In the absence of snoRNA3, forms a complex with other t-UTPs. This complex can associate with pre-18S ribosomal RNAs.

It is found in the nucleus. The protein localises to the nucleolus. Its function is as follows. Involved in nucleolar processing of pre-18S ribosomal RNA. Required for optimal pre-ribosomal RNA transcription by RNA polymerase I together with a subset of U3 proteins required for transcription (t-UTPs). The chain is U3 small nucleolar RNA-associated protein 4 (UTP4) from Saccharomyces cerevisiae (strain ATCC 204508 / S288c) (Baker's yeast).